The sequence spans 277 residues: Coiled-coil domain-containing protein 117 (277 aa).

The interval 1-69 is disordered; the sequence is MAALGRPFSG…GRVSIHCRKK (69 aa). Over residues 26–37 the composition is skewed to low complexity; it reads FAGRAFPPGAAG. An Omega-N-methylarginine modification is found at R47. S52 carries the post-translational modification Phosphoserine. Over residues 58–69 the composition is skewed to basic residues; it reads ARGRVSIHCRKK. A coiled-coil region spans residues 139–166; that stretch reads QCEVARRRLQEIEDRIIDEDEEVESDRN. The disordered stretch occupies residues 212–277; sequence LPELLPEKPK…ATSTEEEMEL (66 aa).

Interacts with CIAO2B; the interaction is direct. Interacts with MMS19; the interaction is indirect.

It localises to the cytoplasm. It is found in the cytoskeleton. The protein localises to the spindle. Its subcellular location is the nucleus. Facilitates DNA repair, cell cycle progression, and cell proliferation through its interaction with CIAO2B. In Mus musculus (Mouse), this protein is Coiled-coil domain-containing protein 117.